We begin with the raw amino-acid sequence, 487 residues long: Kynureninase 1 (487 aa).

Residues Leu-149, Thr-150, 177–180 (FPSD), Ser-234, Asp-263, His-266, and Tyr-288 each bind pyridoxal 5'-phosphate. An N6-(pyridoxal phosphate)lysine modification is found at Lys-289. Pyridoxal 5'-phosphate contacts are provided by Trp-329 and Asn-357.

The protein belongs to the kynureninase family. As to quaternary structure, homodimer. It depends on pyridoxal 5'-phosphate as a cofactor.

It is found in the cytoplasm. The enzyme catalyses L-kynurenine + H2O = anthranilate + L-alanine + H(+). It catalyses the reaction 3-hydroxy-L-kynurenine + H2O = 3-hydroxyanthranilate + L-alanine + H(+). It participates in amino-acid degradation; L-kynurenine degradation; L-alanine and anthranilate from L-kynurenine: step 1/1. The protein operates within cofactor biosynthesis; NAD(+) biosynthesis; quinolinate from L-kynurenine: step 2/3. Functionally, catalyzes the cleavage of L-kynurenine (L-Kyn) and L-3-hydroxykynurenine (L-3OHKyn) into anthranilic acid (AA) and 3-hydroxyanthranilic acid (3-OHAA), respectively. This chain is Kynureninase 1 (bna5-1), found in Emericella nidulans (strain FGSC A4 / ATCC 38163 / CBS 112.46 / NRRL 194 / M139) (Aspergillus nidulans).